Here is a 303-residue protein sequence, read N- to C-terminus: uncharacterized protein (303 aa).

A Phosphoserine modification is found at Ser63.

This sequence belongs to the HAD-like hydrolase superfamily.

Its subcellular location is the cytoplasm. It is found in the nucleus. This is an uncharacterized protein from Schizosaccharomyces pombe (strain 972 / ATCC 24843) (Fission yeast).